A 191-amino-acid chain; its full sequence is Cyclin-dependent kinase inhibitor 1 (191 aa).

A disordered region spans residues 62-81 (LIHLEEEDKDGDTETSTYRR). Residues 162 to 191 (QLKEKFKKKYNFDFEKEKPLEGRYEWVKLE) form a required for inhibitory function and interaction with CDK kinase complexes region.

This sequence belongs to the CDI family. ICK/KRP subfamily. As to quaternary structure, specifically interacts with CDKA-1, but not with CDKB1-1. Interacts with CYCD2-1 and CYCD3-1. In terms of processing, ubiquitinated independently by RKP and SCF (SKP1-CUL1-FBL5/SKP2B) protein ligase complex, leading to proteasomal degradation. Expressed at low levels in roots, stems, leaves and flowers.

It localises to the nucleus. The protein localises to the nucleoplasm. Its function is as follows. Binds and inhibits CYCD2-1/CDKA-1 kinase complex activity. Regulates cell division which is crucial for plant growth, development and morphogenesis. Functions in turning cells from a mitotic to an endoreplicating cell cycle mode. Acts cell- and non-cell-autonomously to regulate endoreduplication by allowing S phase progression, but blocking entry into mitosis. Keeps on the one hand the plant cell cycle locally controlled, and on the other hand provides a possibility of linking cell cycle control in single cells with the supracellular organization of a tissue or an organ. May target specifically CDKA-1. The sequence is that of Cyclin-dependent kinase inhibitor 1 (KRP1) from Arabidopsis thaliana (Mouse-ear cress).